The chain runs to 361 residues: Inner kinetochore subunit CNN1 (361 aa).

The tract at residues 1 to 22 is disordered; sequence MSTPRKAAGNNENTEVSEIRTP. A Phosphoserine; by CDK1 modification is found at S2. T14 carries the phosphothreonine; by CDK1 and MPS1 modification. Phosphoserine; by CDK1 and MPS1 is present on S17. A phosphothreonine; by CDK1 mark is found at T21 and T42. Residue S50 is modified to Phosphoserine; by CDK1 and MPS1. S52 carries the phosphoserine; by CDK1 modification. T53 is subject to Phosphothreonine; by MPS1. S55 carries the phosphoserine; by CDK1 modification. Residues 60–84 form an interacts with the NDC80 complex subunits SPC24 and SPC25 and with the KNL1 complex region; the sequence is NKDPNEVRSFLQDLSQVLARKSQGN. S74 carries the phosphoserine; by CDK1 and MPS1 modification. T86 and T88 each carry phosphothreonine; by MPS1. A Phosphothreonine; by CDK1 and MPS1 modification is found at T91. Residues 103-132 are disordered; sequence EESQPEENELLRSRSEKLTDNNIGNETQPD. Basic and acidic residues predominate over residues 111–121; it reads ELLRSRSEKLT. Residue S115 is modified to Phosphoserine; by CDK1. Residues 122-132 are compositionally biased toward polar residues; that stretch reads DNNIGNETQPD. A Phosphothreonine; by CDK1 and MPS1 modification is found at T129. A Phosphothreonine; by MPS1 modification is found at T134. S135 bears the Phosphoserine; by MPS1 mark. T139 carries the phosphothreonine; by CDK1 and MPS1 modification. S153 carries the phosphoserine; by MPS1 modification. T174 carries the post-translational modification Phosphothreonine; by MPS1. Residue S177 is modified to Phosphoserine; by CDK1. Residue T191 is modified to Phosphothreonine; by CDK1. A Phosphoserine; by CDK1 modification is found at S192. The disordered stretch occupies residues 193 to 255; sequence PSIGMDQVDE…SDENLDDIGN (63 aa). The span at 219 to 254 shows a compositional bias: acidic residues; that stretch reads PLSEDLPSDDKEETEEAENEDYSFENTSDENLDDIG. S268 is modified (phosphoserine; by CDK1). At S269 the chain carries Phosphoserine; by MPS1 and IPL1.

This sequence belongs to the CENP-T/CNN1 family. In terms of assembly, component of the inner kinetochore constitutive centromere-associated network (CCAN) (also known as central kinetochore CTF19 complex in yeast), which is composed of at least AME1, CHL4, CNN1, CTF3, CTF19, IML3, MCM16, MCM21, MCM22, MHF1, MHF2, MIF2, NKP1, NKP2, OKP1 and WIP1. Interacts (via N-terminus) with the outer kinetochore NDC80 complex subunits SPC24 (via C-terminus) and SPC25 (via C-terminus); the interaction is direct and contributes to the correct spatiotemporal organization of the KMN network. Interacts with outer kinetochore MIS12 complex subunit NNF1. Interacts (via N-terminus) with the KNL1 complex. Phosphorylation of the C-terminus by MPS1 kinase regulates interaction with the outer kinetochore Ndc80 complex. Phosphorylation levels rise from S-phase and through metaphase, the protein is thendephosphorylated in anaphase.

The protein localises to the nucleus. It is found in the chromosome. Its subcellular location is the centromere. It localises to the kinetochore. Its function is as follows. Component of the kinetochore, a multiprotein complex that assembles on centromeric DNA and attaches chromosomes to spindle microtubules, mediating chromosome segregation and sister chromatid segregation during meiosis and mitosis. Component of the inner kinetochore constitutive centromere-associated network (CCAN), which serves as a structural platform for outer kinetochore assembly. Modulates outer kinetochore KMN network activity by regulating interactions within the network. The sequence is that of Inner kinetochore subunit CNN1 (CNN1) from Saccharomyces cerevisiae (strain ATCC 204508 / S288c) (Baker's yeast).